The primary structure comprises 227 residues: Enolase-phosphatase E1 (227 aa).

This sequence belongs to the HAD-like hydrolase superfamily. MasA/MtnC family. Monomer. It depends on Mg(2+) as a cofactor.

The catalysed reaction is 5-methylsulfanyl-2,3-dioxopentyl phosphate + H2O = 1,2-dihydroxy-5-(methylsulfanyl)pent-1-en-3-one + phosphate. It functions in the pathway amino-acid biosynthesis; L-methionine biosynthesis via salvage pathway; L-methionine from S-methyl-5-thio-alpha-D-ribose 1-phosphate: step 3/6. It participates in amino-acid biosynthesis; L-methionine biosynthesis via salvage pathway; L-methionine from S-methyl-5-thio-alpha-D-ribose 1-phosphate: step 4/6. In terms of biological role, bifunctional enzyme that catalyzes the enolization of 2,3-diketo-5-methylthiopentyl-1-phosphate (DK-MTP-1-P) into the intermediate 2-hydroxy-3-keto-5-methylthiopentenyl-1-phosphate (HK-MTPenyl-1-P), which is then dephosphorylated to form the acireductone 1,2-dihydroxy-3-keto-5-methylthiopentene (DHK-MTPene). The protein is Enolase-phosphatase E1 of Gluconobacter oxydans (strain 621H) (Gluconobacter suboxydans).